We begin with the raw amino-acid sequence, 249 residues long: MSGHSKWSTIKHKKGAADAKRGKVFTKIIKEIMVAARMGGGAIDANPRLRAAVLAAKAENMPKENIERAIKKGTGELEGVAYEEMNYEGYGPGGVAVLVDIMTDNRNRAASDIRHIFSRNGGNLGEAGCVAWMFSKKGSIVFNKDKVSEDELMEIALDAGADDVKDEDDQFEVITSLEEFVNVRAAFDARELAYEVAEITMVPQTTVRVEDEKLAQQLLRLMDGLEDSDDVQNAYANFDIPDEILDRIA.

This sequence belongs to the TACO1 family.

Its subcellular location is the cytoplasm. This Syntrophobacter fumaroxidans (strain DSM 10017 / MPOB) protein is Probable transcriptional regulatory protein Sfum_0996.